The primary structure comprises 317 residues: NAC domain-containing protein 19 (317 aa).

Positions 14 to 162 (LPPGFRFYPT…DWVLCRIYKK (149 aa)) constitute an NAC domain.

Dimer. Interacts with RHA2A, RHA2B or RHG1A, but not with RHA3A or RHA3B. Expressed in stems, flowers, cauline leaves and rosettes.

Its subcellular location is the nucleus. In terms of biological role, transcription factors that bind specifically to the 5'-CATGTG-3' motif. In Arabidopsis thaliana (Mouse-ear cress), this protein is NAC domain-containing protein 19 (NAC019).